The chain runs to 356 residues: MHKVLAIETSCDETSVSIVSNIGDTFRIHSNIIASQIEDHSKWGGVVPELAARKHLELLPFVLDKALEEAKIKIEEVDYIASTVAPGLVGCLRVGSITARSLCMLHSKPFLGIHHLEGHLSSILFSENYPKKSFLTLLVSGGHTELIKVDDSRGMQRLGKSFDDAAGEAFDKVGRLLGLSYPGGPAIEKIAKNGDPMKFNLPKCKISDKKGGFLKYDFSFSGLKTAVLRLVERINLTGKTVPIPDIAASFERVVAEVLVDRTIKCAQDHSLDTVVVVGGVAANNTLRKMMISEASKKSIKVHLAPLDLCTDNAAMIGAAALFRIKFKDHFSSLKLGVAGRLSIEQADNLYEETPPF.

Fe cation is bound by residues His115 and His119. Substrate-binding positions include 138 to 142 (LVSGG), Asp171, Gly184, and Asn283. Position 311 (Asp311) interacts with Fe cation.

This sequence belongs to the KAE1 / TsaD family. It depends on Fe(2+) as a cofactor.

Its subcellular location is the cytoplasm. It carries out the reaction L-threonylcarbamoyladenylate + adenosine(37) in tRNA = N(6)-L-threonylcarbamoyladenosine(37) in tRNA + AMP + H(+). Functionally, required for the formation of a threonylcarbamoyl group on adenosine at position 37 (t(6)A37) in tRNAs that read codons beginning with adenine. Is involved in the transfer of the threonylcarbamoyl moiety of threonylcarbamoyl-AMP (TC-AMP) to the N6 group of A37, together with TsaE and TsaB. TsaD likely plays a direct catalytic role in this reaction. In Prochlorococcus marinus (strain AS9601), this protein is tRNA N6-adenosine threonylcarbamoyltransferase.